Reading from the N-terminus, the 407-residue chain is Argininosuccinate synthase (407 aa).

Residues 16 to 24 (AYSGGLDTS) and Ala-44 each bind ATP. The L-citrulline site is built by Tyr-96 and Ser-101. Gly-126 contributes to the ATP binding site. Positions 128, 132, and 133 each coordinate L-aspartate. Asn-132 serves as a coordination point for L-citrulline. Positions 136, 185, 194, 270, and 282 each coordinate L-citrulline.

Belongs to the argininosuccinate synthase family. Type 1 subfamily. In terms of assembly, homotetramer.

The protein resides in the cytoplasm. It carries out the reaction L-citrulline + L-aspartate + ATP = 2-(N(omega)-L-arginino)succinate + AMP + diphosphate + H(+). The protein operates within amino-acid biosynthesis; L-arginine biosynthesis; L-arginine from L-ornithine and carbamoyl phosphate: step 2/3. The chain is Argininosuccinate synthase from Shewanella oneidensis (strain ATCC 700550 / JCM 31522 / CIP 106686 / LMG 19005 / NCIMB 14063 / MR-1).